The primary structure comprises 506 residues: 2,3-bisphosphoglycerate-independent phosphoglycerate mutase (506 aa).

Residues Asp-13 and Ser-63 each contribute to the Mn(2+) site. Ser-63 acts as the Phosphoserine intermediate in catalysis. Residues His-124, 153–154, Arg-183, Arg-189, 254–257, and Lys-330 each bind substrate; these read RD and RADR. Residues Asp-396, His-400, Asp-437, His-438, and His-456 each coordinate Mn(2+).

The protein belongs to the BPG-independent phosphoglycerate mutase family. In terms of assembly, monomer. Requires Mn(2+) as cofactor.

The catalysed reaction is (2R)-2-phosphoglycerate = (2R)-3-phosphoglycerate. The protein operates within carbohydrate degradation; glycolysis; pyruvate from D-glyceraldehyde 3-phosphate: step 3/5. Its function is as follows. Catalyzes the interconversion of 2-phosphoglycerate and 3-phosphoglycerate. This Cereibacter sphaeroides (strain ATCC 17023 / DSM 158 / JCM 6121 / CCUG 31486 / LMG 2827 / NBRC 12203 / NCIMB 8253 / ATH 2.4.1.) (Rhodobacter sphaeroides) protein is 2,3-bisphosphoglycerate-independent phosphoglycerate mutase.